A 265-amino-acid chain; its full sequence is Acetylglutamate kinase (265 aa).

Substrate contacts are provided by residues 41-42 (GG), arginine 63, and asparagine 156.

This sequence belongs to the acetylglutamate kinase family. ArgB subfamily.

It localises to the cytoplasm. It carries out the reaction N-acetyl-L-glutamate + ATP = N-acetyl-L-glutamyl 5-phosphate + ADP. It participates in amino-acid biosynthesis; L-arginine biosynthesis; N(2)-acetyl-L-ornithine from L-glutamate: step 2/4. Its function is as follows. Catalyzes the ATP-dependent phosphorylation of N-acetyl-L-glutamate. This Oceanobacillus iheyensis (strain DSM 14371 / CIP 107618 / JCM 11309 / KCTC 3954 / HTE831) protein is Acetylglutamate kinase.